We begin with the raw amino-acid sequence, 1018 residues long: 2-oxoglutarate dehydrogenase-like, mitochondrial (1018 aa).

His-138, Asp-151, and Asp-153 together coordinate Ca(2+). 5 residues coordinate thiamine diphosphate: Arg-307, Asp-406, Asn-439, Ile-441, and Gln-671. Mg(2+) is bound by residues Asp-406, Asn-439, and Ile-441.

It belongs to the alpha-ketoglutarate dehydrogenase family. In terms of assembly, the OGDHC complex comprises multiple copies of three catalytic enzyme components, the 2-oxoglutarate dehydrogenase (OGDH/E1), the dihydrolipoamide dehydrogenase (DLST/E2) and the dihydrolipoamide dehydrogenase (DLD/E3). OGDHL/E1-like isoenzyme may replace OGDH in the OGDHC complex in the brain. The cofactor is thiamine diphosphate. Requires Mg(2+) as cofactor.

Its subcellular location is the mitochondrion matrix. It carries out the reaction N(6)-[(R)-lipoyl]-L-lysyl-[protein] + 2-oxoglutarate + H(+) = N(6)-[(R)-S(8)-succinyldihydrolipoyl]-L-lysyl-[protein] + CO2. In terms of biological role, 2-oxoglutarate dehydrogenase (E1-like) component of the 2-oxoglutarate dehydrogenase multienzyme complex (OGDHC) which mediates the decarboxylation of alpha-ketoglutarate in the tricarboxylic acid cycle. The OGDHC complex catalyzes the overall conversion of 2-oxoglutarate to succinyl-CoA and CO(2) while reducing NAD(+) to NADH. The OGDHC complex is mainly active in the mitochondrion. Involved in the inhibition of cell proliferation and in apoptosis. This chain is 2-oxoglutarate dehydrogenase-like, mitochondrial (ogdhl), found in Xenopus laevis (African clawed frog).